Reading from the N-terminus, the 261-residue chain is Cytochrome c oxidase subunit 3 (261 aa).

Residues 1 to 15 (MTHQTHAYHMVNPSP) are Mitochondrial matrix-facing. The chain crosses the membrane as a helical span at residues 16–34 (WPLTGALSALLMTSGLIMW). Residues 35-40 (FHFNSV) are Mitochondrial intermembrane-facing. A helical membrane pass occupies residues 41–66 (ALLMLGLTTNMLTMYQWWRDVIREST). Over 67-72 (FQGHHT) the chain is Mitochondrial matrix. The chain crosses the membrane as a helical span at residues 73–105 (PNVQKGLRYGMILFIISEVLFFTGFFWAFYHSS). The Mitochondrial intermembrane segment spans residues 106–128 (LAPTPELGGCWPPTGIHPLNPLE). A helical membrane pass occupies residues 129–152 (VPLLNTSVLLASGVSITWAHHSLM). Residues 153–155 (EGN) are Mitochondrial matrix-facing. The chain crosses the membrane as a helical span at residues 156–183 (RNHMLQALFITIALGVYFTLLQASEYYE). The Mitochondrial intermembrane portion of the chain corresponds to 184–190 (APFTISD). Residues 191-223 (GVYGSTFFVATGFHGLHVIIGSTFLIVCFFRQL) traverse the membrane as a helical segment. Topologically, residues 224–232 (KFHFTSSHH) are mitochondrial matrix. The helical transmembrane segment at 233–256 (FGFEAAAWYWHFVDVVWLFLYVSI) threads the bilayer. The Mitochondrial intermembrane portion of the chain corresponds to 257 to 261 (YWWGS).

This sequence belongs to the cytochrome c oxidase subunit 3 family. As to quaternary structure, component of the cytochrome c oxidase (complex IV, CIV), a multisubunit enzyme composed of 14 subunits. The complex is composed of a catalytic core of 3 subunits MT-CO1, MT-CO2 and MT-CO3, encoded in the mitochondrial DNA, and 11 supernumerary subunits COX4I, COX5A, COX5B, COX6A, COX6B, COX6C, COX7A, COX7B, COX7C, COX8 and NDUFA4, which are encoded in the nuclear genome. The complex exists as a monomer or a dimer and forms supercomplexes (SCs) in the inner mitochondrial membrane with NADH-ubiquinone oxidoreductase (complex I, CI) and ubiquinol-cytochrome c oxidoreductase (cytochrome b-c1 complex, complex III, CIII), resulting in different assemblies (supercomplex SCI(1)III(2)IV(1) and megacomplex MCI(2)III(2)IV(2)).

The protein resides in the mitochondrion inner membrane. The enzyme catalyses 4 Fe(II)-[cytochrome c] + O2 + 8 H(+)(in) = 4 Fe(III)-[cytochrome c] + 2 H2O + 4 H(+)(out). Component of the cytochrome c oxidase, the last enzyme in the mitochondrial electron transport chain which drives oxidative phosphorylation. The respiratory chain contains 3 multisubunit complexes succinate dehydrogenase (complex II, CII), ubiquinol-cytochrome c oxidoreductase (cytochrome b-c1 complex, complex III, CIII) and cytochrome c oxidase (complex IV, CIV), that cooperate to transfer electrons derived from NADH and succinate to molecular oxygen, creating an electrochemical gradient over the inner membrane that drives transmembrane transport and the ATP synthase. Cytochrome c oxidase is the component of the respiratory chain that catalyzes the reduction of oxygen to water. Electrons originating from reduced cytochrome c in the intermembrane space (IMS) are transferred via the dinuclear copper A center (CU(A)) of subunit 2 and heme A of subunit 1 to the active site in subunit 1, a binuclear center (BNC) formed by heme A3 and copper B (CU(B)). The BNC reduces molecular oxygen to 2 water molecules using 4 electrons from cytochrome c in the IMS and 4 protons from the mitochondrial matrix. This chain is Cytochrome c oxidase subunit 3 (MT-CO3), found in Nanger granti (Grant's gazelle).